We begin with the raw amino-acid sequence, 164 residues long: Elicitin-like protein 2 (164 aa).

Residues 1–22 (MFSKTLVVLAAVAAVTVNGLTA) form the signal peptide. 3 disulfide bridges follow: Cys25–Cys91, Cys47–Cys76, and Cys71–Cys118. The interval 121 to 164 (ISGGGSTPTTAPPSGTTPTTPTTAPPTGTTPGVTPSPTTPKPAC) is disordered. The span at 127 to 156 (TPTTAPPSGTTPTTPTTAPPTGTTPGVTPS) shows a compositional bias: low complexity.

Belongs to the elicitin family.

The protein localises to the secreted. Induces local and distal defense responses (incompatible hypersensitive reaction) in plants from the solanaceae and cruciferae families. Elicits leaf necrosis and causes the accumulation of pathogenesis-related proteins. Might interact with the lipidic molecules of the plasma membrane. The chain is Elicitin-like protein 2 (POD-2) from Pythium oligandrum (Mycoparasitic fungus).